Consider the following 944-residue polypeptide: 2-oxoglutarate dehydrogenase E1 component (944 aa).

A disordered region spans residues 918–944 (SSTAEGDPTVHKKEQERIVSDSLTRKN). Positions 925–936 (PTVHKKEQERIV) are enriched in basic and acidic residues.

It belongs to the alpha-ketoglutarate dehydrogenase family. In terms of assembly, homodimer. Part of the 2-oxoglutarate dehydrogenase (OGDH) complex composed of E1 (2-oxoglutarate dehydrogenase), E2 (dihydrolipoamide succinyltransferase) and E3 (dihydrolipoamide dehydrogenase); the complex contains multiple copies of the three enzymatic components (E1, E2 and E3). The cofactor is thiamine diphosphate.

The enzyme catalyses N(6)-[(R)-lipoyl]-L-lysyl-[protein] + 2-oxoglutarate + H(+) = N(6)-[(R)-S(8)-succinyldihydrolipoyl]-L-lysyl-[protein] + CO2. In terms of biological role, E1 component of the 2-oxoglutarate dehydrogenase (OGDH) complex which catalyzes the decarboxylation of 2-oxoglutarate, the first step in the conversion of 2-oxoglutarate to succinyl-CoA and CO(2). The chain is 2-oxoglutarate dehydrogenase E1 component from Bacillus pumilus (strain SAFR-032).